A 299-amino-acid chain; its full sequence is ATP synthase gamma chain (299 aa).

The protein belongs to the ATPase gamma chain family. As to quaternary structure, F-type ATPases have 2 components, CF(1) - the catalytic core - and CF(0) - the membrane proton channel. CF(1) has five subunits: alpha(3), beta(3), gamma(1), delta(1), epsilon(1). CF(0) has three main subunits: a, b and c.

The protein localises to the cell membrane. Produces ATP from ADP in the presence of a proton gradient across the membrane. The gamma chain is believed to be important in regulating ATPase activity and the flow of protons through the CF(0) complex. The polypeptide is ATP synthase gamma chain (Clavibacter sepedonicus (Clavibacter michiganensis subsp. sepedonicus)).